Consider the following 339-residue polypeptide: UDP-N-acetylenolpyruvoylglucosamine reductase (339 aa).

The FAD-binding PCMH-type domain maps to G18–T189. Residue R166 is part of the active site. S239 (proton donor) is an active-site residue. Residue E335 is part of the active site.

The protein belongs to the MurB family. FAD is required as a cofactor.

The protein localises to the cytoplasm. The catalysed reaction is UDP-N-acetyl-alpha-D-muramate + NADP(+) = UDP-N-acetyl-3-O-(1-carboxyvinyl)-alpha-D-glucosamine + NADPH + H(+). The protein operates within cell wall biogenesis; peptidoglycan biosynthesis. Cell wall formation. This Pseudomonas putida (strain ATCC 47054 / DSM 6125 / CFBP 8728 / NCIMB 11950 / KT2440) protein is UDP-N-acetylenolpyruvoylglucosamine reductase.